The primary structure comprises 63 residues: Large ribosomal subunit protein bL28 (63 aa).

This sequence belongs to the bacterial ribosomal protein bL28 family.

The sequence is that of Large ribosomal subunit protein bL28 from Sulfurihydrogenibium sp. (strain YO3AOP1).